We begin with the raw amino-acid sequence, 437 residues long: GTPase Obg (437 aa).

Residues 2-160 enclose the Obg domain; it reads SLFLDTARIE…KILLLELRVL (159 aa). The region spanning 161-338 is the OBG-type G domain; the sequence is ADVGLVGFPS…LLARTSELLA (178 aa). GTP-binding positions include 167–174, 192–196, 214–217, 284–287, and 319–321; these read GFPSVGKS, FTTIT, DMPG, NKMD, and SGL. The Mg(2+) site is built by serine 174 and threonine 194. The OCT domain occupies 359 to 437; it reads GFEEEEKPFK…IQKFEFEFVD (79 aa).

This sequence belongs to the TRAFAC class OBG-HflX-like GTPase superfamily. OBG GTPase family. As to quaternary structure, monomer. It depends on Mg(2+) as a cofactor.

The protein localises to the cytoplasm. Its function is as follows. An essential GTPase which binds GTP, GDP and possibly (p)ppGpp with moderate affinity, with high nucleotide exchange rates and a fairly low GTP hydrolysis rate. Plays a role in control of the cell cycle, stress response, ribosome biogenesis and in those bacteria that undergo differentiation, in morphogenesis control. In Lactococcus lactis subsp. lactis (strain IL1403) (Streptococcus lactis), this protein is GTPase Obg.